A 156-amino-acid polypeptide reads, in one-letter code: MSRRHSAEKREIIPDAKYGDVVLTKFMNSIMYEGKKSTAERIVYGAFDLVESRARANPIEVFRAALDNVAPAIEVRSRRVGGATYQVPVEVRTERRQALAIRWLIQAARGRNDRTMVERLSAELLDAANNRGNAVKKREDTHRMAEANRAFSHYRW.

Belongs to the universal ribosomal protein uS7 family. Part of the 30S ribosomal subunit. Contacts proteins S9 and S11.

In terms of biological role, one of the primary rRNA binding proteins, it binds directly to 16S rRNA where it nucleates assembly of the head domain of the 30S subunit. Is located at the subunit interface close to the decoding center, probably blocks exit of the E-site tRNA. This is Small ribosomal subunit protein uS7 from Methylorubrum populi (strain ATCC BAA-705 / NCIMB 13946 / BJ001) (Methylobacterium populi).